Here is a 74-residue protein sequence, read N- to C-terminus: Cell division protein ZapB (74 aa).

Residues 2–74 (TLDLLEQLES…LVGKIEETES (73 aa)) adopt a coiled-coil conformation.

The protein belongs to the ZapB family. In terms of assembly, homodimer. The ends of the coiled-coil dimer bind to each other, forming polymers. Interacts with FtsZ.

It is found in the cytoplasm. Functionally, non-essential, abundant cell division factor that is required for proper Z-ring formation. It is recruited early to the divisome by direct interaction with FtsZ, stimulating Z-ring assembly and thereby promoting cell division earlier in the cell cycle. Its recruitment to the Z-ring requires functional FtsA or ZipA. The protein is Cell division protein ZapB of Psychromonas ingrahamii (strain DSM 17664 / CCUG 51855 / 37).